A 372-amino-acid polypeptide reads, in one-letter code: Chaperone protein DnaJ (372 aa).

The region spanning 5-70 (DYYEVLGVAK…DKRAAYDQFG (66 aa)) is the J domain. Residues 133 to 211 (GTETKIRIPT…CHGEGRVKKH (79 aa)) form a CR-type zinc finger. Zn(2+) is bound by residues cysteine 146, cysteine 149, cysteine 163, cysteine 166, cysteine 185, cysteine 188, cysteine 199, and cysteine 202. CXXCXGXG motif repeat units follow at residues 146-153 (CGTCHGSG), 163-170 (CSACGGHG), 185-192 (CPRCGGTG), and 199-206 (CPSCHGEG).

This sequence belongs to the DnaJ family. In terms of assembly, homodimer. It depends on Zn(2+) as a cofactor.

Its subcellular location is the cytoplasm. Its function is as follows. Participates actively in the response to hyperosmotic and heat shock by preventing the aggregation of stress-denatured proteins and by disaggregating proteins, also in an autonomous, DnaK-independent fashion. Unfolded proteins bind initially to DnaJ; upon interaction with the DnaJ-bound protein, DnaK hydrolyzes its bound ATP, resulting in the formation of a stable complex. GrpE releases ADP from DnaK; ATP binding to DnaK triggers the release of the substrate protein, thus completing the reaction cycle. Several rounds of ATP-dependent interactions between DnaJ, DnaK and GrpE are required for fully efficient folding. Also involved, together with DnaK and GrpE, in the DNA replication of plasmids through activation of initiation proteins. The polypeptide is Chaperone protein DnaJ (Thiobacillus denitrificans (strain ATCC 25259 / T1)).